Consider the following 388-residue polypeptide: Chaperone protein DnaJ (388 aa).

Residues Asp-5–Gly-70 form the J domain. The segment at Gly-135–Ser-213 adopts a CR-type zinc-finger fold. Cys-148, Cys-151, Cys-165, Cys-168, Cys-187, Cys-190, Cys-201, and Cys-204 together coordinate Zn(2+). CXXCXGXG motif repeat units lie at residues Cys-148 to Gly-155, Cys-165 to Gly-172, Cys-187 to Gly-194, and Cys-201 to Gly-208.

Belongs to the DnaJ family. In terms of assembly, homodimer. The cofactor is Zn(2+).

The protein localises to the cytoplasm. Participates actively in the response to hyperosmotic and heat shock by preventing the aggregation of stress-denatured proteins and by disaggregating proteins, also in an autonomous, DnaK-independent fashion. Unfolded proteins bind initially to DnaJ; upon interaction with the DnaJ-bound protein, DnaK hydrolyzes its bound ATP, resulting in the formation of a stable complex. GrpE releases ADP from DnaK; ATP binding to DnaK triggers the release of the substrate protein, thus completing the reaction cycle. Several rounds of ATP-dependent interactions between DnaJ, DnaK and GrpE are required for fully efficient folding. Also involved, together with DnaK and GrpE, in the DNA replication of plasmids through activation of initiation proteins. The chain is Chaperone protein DnaJ from Buchnera aphidicola subsp. Cinara cedri (strain Cc).